Consider the following 303-residue polypeptide: Sulfotransferase 6B1 (303 aa).

65-70 (KCGSNW) lines the 3'-phosphoadenylyl sulfate pocket. The active-site Proton acceptor is the H118. Residues R140, S148, Y203, 237–242 (STFQAM), and 259–261 (RKG) each bind 3'-phosphoadenylyl sulfate.

It belongs to the sulfotransferase 1 family.

The protein localises to the cytoplasm. It localises to the cytosol. It carries out the reaction thyroxine + 3'-phosphoadenylyl sulfate = thyroxine sulfate + adenosine 3',5'-bisphosphate + H(+). Functionally, sulfotransferase that utilizes 3'-phospho-5'-adenylyl sulfate (PAPS) as sulfonate donor to catalyze the sulfate conjugation of thyroxine. Involved in the metabolism of thyroxine. The polypeptide is Sulfotransferase 6B1 (SULT6B1) (Gorilla gorilla gorilla (Western lowland gorilla)).